We begin with the raw amino-acid sequence, 259 residues long: Type III pantothenate kinase (259 aa).

ATP is bound at residue 6–13 (DVGNTNIV). Substrate-binding positions include Tyr100 and 107-110 (GADR). Asp109 acts as the Proton acceptor in catalysis. Residue Asp129 participates in K(+) binding. Residue Thr132 coordinates ATP. A substrate-binding site is contributed by Thr184.

It belongs to the type III pantothenate kinase family. In terms of assembly, homodimer. The cofactor is NH4(+). K(+) serves as cofactor.

The protein resides in the cytoplasm. It catalyses the reaction (R)-pantothenate + ATP = (R)-4'-phosphopantothenate + ADP + H(+). It functions in the pathway cofactor biosynthesis; coenzyme A biosynthesis; CoA from (R)-pantothenate: step 1/5. Catalyzes the phosphorylation of pantothenate (Pan), the first step in CoA biosynthesis. In Clostridium perfringens (strain ATCC 13124 / DSM 756 / JCM 1290 / NCIMB 6125 / NCTC 8237 / Type A), this protein is Type III pantothenate kinase.